A 363-amino-acid chain; its full sequence is MLKKTVLNAAHRAMNARMVDFGGWDMPVNYGSQIEEHNAVRNNCGMFDVSHMCPVDVVGADCRTFLSRLVANDVAKLKVSGKALYAAMLNEAGGVIDDLIIYFLTDTRFRIVVNAGTAEKDLAWMQAKVAEWKLDVTITQRRDGANNLGIIAVQGPNARAKVWEVLPQTKAATAGLKAFFAAEVDQYFIASTGYTGEDGYEIMMPAGEAEALWNKLNAAGVAPCGLGARDTLRLEAGMNLYGQDMDETVSPLDAGLAWTVSLNTDRDFVGKAALVTNGQQKQFLGLILLDKGVLRGHQKVMTKQGDGEITSGSFSPTLQQSIALARLPLGVQIGDEVEVDIRGKALKAKVTKPVFARNGKAVI.

The protein belongs to the GcvT family. The glycine cleavage system is composed of four proteins: P, T, L and H.

It carries out the reaction N(6)-[(R)-S(8)-aminomethyldihydrolipoyl]-L-lysyl-[protein] + (6S)-5,6,7,8-tetrahydrofolate = N(6)-[(R)-dihydrolipoyl]-L-lysyl-[protein] + (6R)-5,10-methylene-5,6,7,8-tetrahydrofolate + NH4(+). Functionally, the glycine cleavage system catalyzes the degradation of glycine. The chain is Aminomethyltransferase from Dechloromonas aromatica (strain RCB).